The chain runs to 205 residues: N-(5'-phosphoribosyl)anthranilate isomerase (205 aa).

The protein belongs to the TrpF family.

It catalyses the reaction N-(5-phospho-beta-D-ribosyl)anthranilate = 1-(2-carboxyphenylamino)-1-deoxy-D-ribulose 5-phosphate. The protein operates within amino-acid biosynthesis; L-tryptophan biosynthesis; L-tryptophan from chorismate: step 3/5. The polypeptide is N-(5'-phosphoribosyl)anthranilate isomerase (Maridesulfovibrio salexigens (strain ATCC 14822 / DSM 2638 / NCIMB 8403 / VKM B-1763) (Desulfovibrio salexigens)).